The primary structure comprises 417 residues: uncharacterized protein (417 aa).

Transmembrane regions (helical) follow at residues 1–21 (MSVL…VLLS), 32–52 (VVGA…VPAG), 96–116 (VLPI…LGIM), 168–188 (LFAI…AGYA), 192–212 (VPLT…LLFA), 261–281 (IAFV…GGWF), 286–306 (LTLQ…IGVT), 351–371 (AIIT…ILIG), and 392–412 (VIAG…FIGL).

It belongs to the concentrative nucleoside transporter (CNT) (TC 2.A.41) family.

The protein resides in the cell inner membrane. This is an uncharacterized protein from Haemophilus influenzae (strain ATCC 51907 / DSM 11121 / KW20 / Rd).